Consider the following 428-residue polypeptide: Glutamate-1-semialdehyde 2,1-aminomutase (428 aa).

At K265 the chain carries N6-(pyridoxal phosphate)lysine.

It belongs to the class-III pyridoxal-phosphate-dependent aminotransferase family. HemL subfamily. Homodimer. Requires pyridoxal 5'-phosphate as cofactor.

It localises to the cytoplasm. It catalyses the reaction (S)-4-amino-5-oxopentanoate = 5-aminolevulinate. Its pathway is porphyrin-containing compound metabolism; protoporphyrin-IX biosynthesis; 5-aminolevulinate from L-glutamyl-tRNA(Glu): step 2/2. The sequence is that of Glutamate-1-semialdehyde 2,1-aminomutase from Thioalkalivibrio sulfidiphilus (strain HL-EbGR7).